A 197-amino-acid chain; its full sequence is MPKVGMQPIRRQQLIQATLTAVDQVGMGDASIALIARLAGVSNGIISHYFQDKNGLIAATMRHLMNALIQNVRERRQALTEDSPRAHLQVIIEGNFDASQVSGPAMKTWLAFWATSMHHPSLHRLQRINDHRLYSNLCCQFRRTLPLEQARNAARGLAALIDGLWLRGALSGDAFDTEQAQRIAYEYMDFQLAKSAS.

Residues 8-68 (PIRRQQLIQA…ATMRHLMNAL (61 aa)) enclose the HTH tetR-type domain. A DNA-binding region (H-T-H motif) is located at residues 31-50 (SIALIARLAGVSNGIISHYF).

The protein operates within amine and polyamine biosynthesis; betaine biosynthesis via choline pathway [regulation]. Its function is as follows. Repressor involved in the biosynthesis of the osmoprotectant glycine betaine. It represses transcription of the choline transporter BetT and the genes of BetAB involved in the synthesis of glycine betaine. The sequence is that of HTH-type transcriptional regulator BetI from Pseudomonas syringae pv. tomato (strain ATCC BAA-871 / DC3000).